Consider the following 293-residue polypeptide: Triosephosphate isomerase (293 aa).

25–27 is a substrate binding site; it reads NWK. The Electrophile role is filled by His-117. Glu-218 functions as the Proton acceptor in the catalytic mechanism.

This sequence belongs to the triosephosphate isomerase family. Homodimer.

The protein resides in the cytoplasm. It carries out the reaction D-glyceraldehyde 3-phosphate = dihydroxyacetone phosphate. It participates in carbohydrate biosynthesis; gluconeogenesis. The protein operates within carbohydrate degradation; glycolysis; D-glyceraldehyde 3-phosphate from glycerone phosphate: step 1/1. In terms of biological role, involved in the gluconeogenesis. Catalyzes stereospecifically the conversion of dihydroxyacetone phosphate (DHAP) to D-glyceraldehyde-3-phosphate (G3P). In Tropheryma whipplei (strain TW08/27) (Whipple's bacillus), this protein is Triosephosphate isomerase.